Reading from the N-terminus, the 382-residue chain is Gap junction alpha-1 protein (382 aa).

Residues 2 to 23 (GDWSALGKLLDKVQAYSTAGGK) are Cytoplasmic-facing. Position 5 is a phosphoserine (S5). Residues 24–44 (VWLSVLFIFRILLLGTAVESA) form a helical membrane-spanning segment. Over 45–76 (WGDEQSAFRCNTQQPGCENVCYDKSFPISHVR) the chain is Extracellular. Cystine bridges form between C54–C192 and C187–C198. A helical transmembrane segment spans residues 77 to 97 (FWVLQIIFVSVPTLLYLAHVF). At 98–155 (YVMRKEEKLNKKEEELKVAQTDGVNVEMHLKQIEIKKFKYGIEEHGKVKMRGGLLRTY) the chain is on the cytoplasmic side. A Glycyl lysine isopeptide (Lys-Gly) (interchain with G-Cter in SUMO) cross-link involves residue K144. Residues 156 to 176 (IISILFKSIFEVAFLLIQWYI) form a helical membrane-spanning segment. Topologically, residues 177–207 (YGFSLSAVYTCKRDPCPHQVDCFLSRPTEKT) are extracellular. The helical transmembrane segment at 208 to 228 (IFIIFMLVVSLVSLALNIIEL) threads the bilayer. The Cytoplasmic segment spans residues 229 to 382 (FYVFFKGVKD…SRPRPDDLEI (154 aa)). A Glycyl lysine isopeptide (Lys-Gly) (interchain with G-Cter in SUMO) cross-link involves residue K237. The interaction with NOV stretch occupies residues 244-382 (SDPYHTTSGA…SRPRPDDLEI (139 aa)). At Y247 the chain carries Phosphotyrosine. Residues S255 and S262 each carry the phosphoserine modification. An interaction with UBQLN4 region spans residues 264 to 382 (KYAYFNGCSS…SRPRPDDLEI (119 aa)). The residue at position 271 (C271) is an S-nitrosocysteine. T275 carries the post-translational modification Phosphothreonine. A phosphoserine mark is found at S306 and S314. A compositionally biased stretch (polar residues) spans 317–332 (QNRMGQAGSTISNSHA). Residues 317–382 (QNRMGQAGST…SRPRPDDLEI (66 aa)) are disordered. At S325 the chain carries Phosphoserine; by CK1. T326 is subject to Phosphothreonine. Residues S328 and S330 each carry the phosphoserine; by CK1 modification. Phosphoserine occurs at positions 344 and 365. The span at 362-374 (RPSSRASSRASSR) shows a compositional bias: low complexity. The residue at position 368 (S368) is a Phosphoserine; by PKC/PRKCG and PKC/PRKCD. Residues S369 and S373 each carry the phosphoserine modification.

This sequence belongs to the connexin family. Alpha-type (group II) subfamily. As to quaternary structure, a connexon is composed of a hexamer of connexins. Interacts with SGSM3. Interacts with RIC1/CIP150. Interacts with CNST and CSNK1D. Interacts (via C-terminus) with TJP1. Interacts (via C-terminus) with SRC (via SH3 domain). Interacts (not ubiquitinated) with UBQLN4 (via UBA domain). Interacts with NOV. Interacts with TMEM65. Interacts with ANK3/ANKG and PKP2. In terms of processing, phosphorylation at Ser-325, Ser-328 and Ser-330 by CK1 modulates gap junction assembly. Phosphorylated at Ser-368 by PRKCG; phosphorylation induces disassembly of gap junction plaques and inhibition of gap junction activity. Phosphorylation at Ser-368 by PRKCD triggers its internalization into small vesicles leading to proteasome-mediated degradation. Post-translationally, sumoylated with SUMO1, SUMO2 and SUMO3, which may regulate the level of functional Cx43 gap junctions at the plasma membrane. May be desumoylated by SENP1 or SENP2. S-nitrosylation at Cys-271 is enriched at the muscle endothelial gap junction in arteries, it augments channel permeability and may regulate of smooth muscle cell to endothelial cell communication. In terms of processing, acetylated in the developing cortex; leading to delocalization from the cell membrane.

Its subcellular location is the cell membrane. It localises to the cell junction. It is found in the gap junction. The protein resides in the endoplasmic reticulum. Functionally, gap junction protein that acts as a regulator of bladder capacity. A gap junction consists of a cluster of closely packed pairs of transmembrane channels, the connexons, through which materials of low MW diffuse from one cell to a neighboring cell. May play a critical role in the physiology of hearing by participating in the recycling of potassium to the cochlear endolymph. Negative regulator of bladder functional capacity: acts by enhancing intercellular electrical and chemical transmission, thus sensitizing bladder muscles to cholinergic neural stimuli and causing them to contract. May play a role in cell growth inhibition through the regulation of NOV expression and localization. Plays an essential role in gap junction communication in the ventricles. This Chlorocebus aethiops (Green monkey) protein is Gap junction alpha-1 protein (GJA1).